The following is a 62-amino-acid chain: Large ribosomal subunit protein bL33 (62 aa).

It belongs to the bacterial ribosomal protein bL33 family.

This chain is Large ribosomal subunit protein bL33, found in Cyanothece sp. (strain PCC 7425 / ATCC 29141).